The following is a 142-amino-acid chain: MKTFTAKPETVKRDWYVVDANGKTLGRLATELARRLRGKHKAEYTPHVDTGDYIIVLNADKVAVTGNKRTDKIYYHHTGHIGGIKQATFEEMIARRPERVIEIAVKGMLPKGPLGRAMFRKLKVYAGTEHNHAAQQPQVLDI.

The protein belongs to the universal ribosomal protein uL13 family. In terms of assembly, part of the 50S ribosomal subunit.

Its function is as follows. This protein is one of the early assembly proteins of the 50S ribosomal subunit, although it is not seen to bind rRNA by itself. It is important during the early stages of 50S assembly. This is Large ribosomal subunit protein uL13 from Pectobacterium atrosepticum (strain SCRI 1043 / ATCC BAA-672) (Erwinia carotovora subsp. atroseptica).